We begin with the raw amino-acid sequence, 98 residues long: uncharacterized protein (98 aa).

The protein belongs to the HesB/IscA family.

This is an uncharacterized protein from Staphylococcus epidermidis (strain ATCC 35984 / DSM 28319 / BCRC 17069 / CCUG 31568 / BM 3577 / RP62A).